Reading from the N-terminus, the 349-residue chain is Mannonate dehydratase (349 aa).

This sequence belongs to the mannonate dehydratase family. Fe(2+) serves as cofactor. It depends on Mn(2+) as a cofactor.

It catalyses the reaction D-mannonate = 2-dehydro-3-deoxy-D-gluconate + H2O. It participates in carbohydrate metabolism; pentose and glucuronate interconversion. Functionally, catalyzes the dehydration of D-mannonate. The chain is Mannonate dehydratase from Oceanobacillus iheyensis (strain DSM 14371 / CIP 107618 / JCM 11309 / KCTC 3954 / HTE831).